Reading from the N-terminus, the 167-residue chain is MKIRGLDQFIQSLDRASRGGLKRKYEQWLESMGFEFLDIIQDEIIRTKTVDTRRLLNSFQKGDQDNIFSMTEGSLKLDVGTNLDYASYVNDGHFTIDPSKNQDRRWVPGRWKGDRFEYDPAEKNSGMLLKFRWVDGSGFWDNAMAIFQLMFERSLERKLQQWIYEEF.

This sequence to B.subtilis XkdI.

This is an uncharacterized protein from Bacillus subtilis (strain 168).